A 1071-amino-acid polypeptide reads, in one-letter code: Exportin-1 (1071 aa).

The 67-residue stretch at 46–112 (AQEVLTHLKE…KKYVVGLIIK (67 aa)) folds into the Importin N-terminal domain. HEAT repeat units follow at residues 217 to 240 (QNAPLVHATLETLLRFLNWIPLGY), 241 to 277 (IFETKLISTLIYKFLNVPMFRNVSLKCLTEIAGVSVS), 354 to 472 (MLLV…YVDT), 515 to 553 (RFLVTVIKDLLGLCEQKRGKDNKAIIASNIMYIVGQYPR), 560 to 597 (KFLKTVVNKLFEFMHETHDGVQDMACDTFIKIAQKCRR), and 602 to 639 (VQVGEVMPFIDEILNNINTIICDLQPQQVHTFYEAVGY). Residues 327-450 (CTFLKEHGQL…VREFMKDTDS (124 aa)) are necessary for interaction with Ran and nuclear export complex formation. The residue at position 391 (serine 391) is a Phosphoserine. The necessary for interaction with RANBP3 stretch occupies residues 411–481 (TVLSKVRLLM…TEIIMTKKLQ (71 aa)). N6-acetyllysine is present on lysine 446. Threonine 448 bears the Phosphothreonine mark. The residue at position 450 (serine 450) is a Phosphoserine. Tyrosine 454 carries the post-translational modification Phosphotyrosine. The residue at position 693 (lysine 693) is an N6-acetyllysine. 3 HEAT repeats span residues 775 to 813 (NFVPPLLDAVLIDYQRNVPAAREPEVLSTMAIIVNKLGG), 885 to 916 (TMRNVADTGLQILFTLLQNVAQEEAAAQSFYQ), and 917 to 954 (TYFCDILQHIFSVVTDTSHTAGLTMHASILAYMFNLVE). Serine 966 and serine 1031 each carry phosphoserine. The HEAT 10 repeat unit spans residues 1002 to 1039 (FSLNQDIPAFKEHLRDFLVQIKEFAGEDTSDLFLEERE).

This sequence belongs to the exportin family. As to quaternary structure, found in a U snRNA export complex with PHAX/RNUXA, NCBP1/CBP80, NCBP2/CBP20, RAN, XPO1 and m7G-capped RNA. Component of a nuclear export receptor complex composed of KPNB1, RAN, SNUPN and XPO1. Found in a trimeric export complex with SNUPN, RAN and XPO1. Found in a nuclear export complex with RANBP3 and RAN. Found in a 60S ribosomal subunit export complex with NMD3, RAN, XPO1. Interacts with DDX3X, NMD3, NUP42, NUP88, NUP214, RANBP3 and TERT. Interacts with NEMF (via its N-terminus). Interacts with the monomeric form of BIRC5/survivin deacetylated at 'Lys-129'. Interacts with DTNBP1 and SERTAD2; the interactions translocate DTNBP1 and SERTAD2 out of the nucleus. Interacts with ATF2. Interacts with SLC35G1 and STIM1. Interacts with DCAF8. Interacts with CPEB3. Interacts with HAX1. Interacts with BOK; translocates to the cytoplasm. Interacts with HSP90AB1. Interacts with LRPPRC; interacts with LRPPRC alone and also when LRPPRC is in complex with EIF4E and with EIF4E sensitivity element (4ESE)-containing mRNAs to form an EIF4E-dependent mRNA export complex.

It localises to the cytoplasm. It is found in the nucleus. The protein localises to the nucleoplasm. Its subcellular location is the cajal body. The protein resides in the nucleolus. Functionally, mediates the nuclear export of cellular proteins (cargos) bearing a leucine-rich nuclear export signal (NES) and of RNAs. In the nucleus, in association with RANBP3, binds cooperatively to the NES on its target protein and to the GTPase Ran in its active GTP-bound form. Docking of this complex to the nuclear pore complex (NPC) is mediated through binding to nucleoporins. Upon transit of a nuclear export complex into the cytoplasm, disassembling of the complex and hydrolysis of Ran-GTP to Ran-GDP (induced by RANBP1 and RANGAP1, respectively) cause release of the cargo from the export receptor. The directionality of nuclear export is thought to be conferred by an asymmetric distribution of the GTP- and GDP-bound forms of Ran between the cytoplasm and nucleus. Involved in U3 snoRNA transport from Cajal bodies to nucleoli. Binds to late precursor U3 snoRNA bearing a TMG cap. The chain is Exportin-1 (Xpo1) from Rattus norvegicus (Rat).